The chain runs to 514 residues: Maltose/maltodextrin transport system permease protein MalF (514 aa).

Over 1 to 13 (MDVIKKKHWWQSD) the chain is Cytoplasmic. Residues 14 to 34 (ALKWSVLGLLGLLVGYLVVLM) form a helical membrane-spanning segment. Over 35–37 (YAQ) the chain is Periplasmic. A helical membrane pass occupies residues 38–58 (GEYLFAITTLILSSAGLYIFA). At 59–70 (NRKAYAWRYVYP) the chain is on the cytoplasmic side. A helical transmembrane segment spans residues 71–91 (GMAGMGLFVLFPLVCTIAIAF). At 92 to 276 (TNYSSTNQLT…VFTDEGIQKP (185 aa)) the chain is on the periplasmic side. A helical transmembrane segment spans residues 277-297 (FLAIFVWTVVFSLITVFLTVA). The region spanning 281 to 505 (FVWTVVFSLI…LLVGALAIVN (225 aa)) is the ABC transmembrane type-1 domain. Topologically, residues 298–319 (VGMVLACLVQWEALRGKAVYRV) are cytoplasmic. The chain crosses the membrane as a helical span at residues 320–340 (LLILPYAVPSFISILIFKGLF). The Periplasmic portion of the chain corresponds to 341–371 (NQSFGEINMMLSALFGVKPAWFSDPTTARTM). The helical transmembrane segment at 372 to 392 (LIIVNTWLGYPYMMILCMGLL) threads the bilayer. The Cytoplasmic segment spans residues 393-416 (KAIPDDLYEASAMDGAGLFQNFFK). A helical transmembrane segment spans residues 417-437 (ITLPLLIKPLTPLMIASFAFN). Residues 438-483 (FNNFVLIQLLTNGGPDRLGTTTPAGYTDLLVNYTYRIAFEGGGGQD) are Periplasmic-facing. A helical membrane pass occupies residues 484–504 (FGLAAAIATLIFLLVGALAIV). The Cytoplasmic segment spans residues 505-514 (NLKATRMKFD).

It belongs to the binding-protein-dependent transport system permease family. MalFG subfamily. As to quaternary structure, the complex is composed of two ATP-binding proteins (MalK), two transmembrane proteins (MalG and MalF) and a solute-binding protein (MalE).

The protein localises to the cell inner membrane. Its function is as follows. Part of the ABC transporter complex MalEFGK involved in maltose/maltodextrin import. Probably responsible for the translocation of the substrate across the membrane. This chain is Maltose/maltodextrin transport system permease protein MalF (malF), found in Shigella flexneri.